The chain runs to 130 residues: Small ribosomal subunit protein uS9 (130 aa).

This sequence belongs to the universal ribosomal protein uS9 family.

The chain is Small ribosomal subunit protein uS9 from Methylibium petroleiphilum (strain ATCC BAA-1232 / LMG 22953 / PM1).